Here is a 375-residue protein sequence, read N- to C-terminus: MSTAGKVIKCKAAVLWELKKPFSIEEVEVAPPKAHEVRIKMVAVGICGTDDHVVSGTMVTPLPVILGHEAAGIVESVGEGVTTVKPGDKVIPLAIPQCGKCRICKNPESNYCLKNDVSNPQGTLQDGTSRFTCRRKPIHHFLGISTFSQYTVVDENAVAKIDAASPLEKVCLIGCGFSTGYGSAVNVAKVTPGSTCAVFGLGGVGLSAIMGCKAAGAARIIAVDINKDKFAKAKELGATECINPQDYKKPIQEVLKEMTDGGVDFSFEVIGRLDTMMASLLCCHEACGTSVIVGVPPDSQNLSMNPMLLLTGRTWKGAILGGFKSKECVPKLVADFMAKKFSLDALITHVLPFEKINEGFDLLHSGKSIRTILMF.

N-acetylserine is present on Ser2. A Phosphoserine modification is found at Ser23. Cys47 serves as a coordination point for Zn(2+). 48–52 (GTDDH) provides a ligand contact to NAD(+). Zn(2+) is bound by residues His68, Cys98, Cys101, Cys104, Cys112, and Cys175. NAD(+) contacts are provided by residues 200–205 (GLGGVG), Asp224, Lys229, Ile270, 293–295 (VGV), 318–320 (AIL), and Arg370.

This sequence belongs to the zinc-containing alcohol dehydrogenase family. In terms of assembly, dimer of identical or heterodimer of closely related subunits alpha, beta, or gamma that are encoded by genes ADH1A, ADH1B, and ADH1C, respectively. Requires Zn(2+) as cofactor.

It is found in the cytoplasm. It catalyses the reaction a primary alcohol + NAD(+) = an aldehyde + NADH + H(+). The catalysed reaction is a secondary alcohol + NAD(+) = a ketone + NADH + H(+). The enzyme catalyses butan-1-ol + NAD(+) = butanal + NADH + H(+). It carries out the reaction 1-propanol + NAD(+) = propanal + NADH + H(+). In terms of biological role, alcohol dehydrogenase. Oxidizes primary as well as secondary alcohols. Ethanol is a very poor substrate. The protein is Alcohol dehydrogenase 1A (ADH1A) of Homo sapiens (Human).